The primary structure comprises 273 residues: ATP synthase subunit delta (273 aa).

This sequence belongs to the ATPase delta chain family. In terms of assembly, F-type ATPases have 2 components, F(1) - the catalytic core - and F(0) - the membrane proton channel. F(1) has five subunits: alpha(3), beta(3), gamma(1), delta(1), epsilon(1). F(0) has three main subunits: a(1), b(2) and c(10-14). The alpha and beta chains form an alternating ring which encloses part of the gamma chain. F(1) is attached to F(0) by a central stalk formed by the gamma and epsilon chains, while a peripheral stalk is formed by the delta and b chains.

The protein localises to the cell membrane. In terms of biological role, f(1)F(0) ATP synthase produces ATP from ADP in the presence of a proton or sodium gradient. F-type ATPases consist of two structural domains, F(1) containing the extramembraneous catalytic core and F(0) containing the membrane proton channel, linked together by a central stalk and a peripheral stalk. During catalysis, ATP synthesis in the catalytic domain of F(1) is coupled via a rotary mechanism of the central stalk subunits to proton translocation. Its function is as follows. This protein is part of the stalk that links CF(0) to CF(1). It either transmits conformational changes from CF(0) to CF(1) or is implicated in proton conduction. The sequence is that of ATP synthase subunit delta from Corynebacterium diphtheriae (strain ATCC 700971 / NCTC 13129 / Biotype gravis).